The sequence spans 143 residues: MKKMLMLAFTFLLALTIHVGEASAVIVKDEEKVSFTMTENEKWFMKSDDLNSNHWTSHFGYRFTIFDTEGCTINARIMRMTLSGYEITVSEKNFSGDHFDFSATDRVETMPYKTHYLILTKDPDCGDVKVKGLYGFQFDQPEW.

A signal peptide spans 1–24 (MKKMLMLAFTFLLALTIHVGEASA).

This is an uncharacterized protein from Bacillus subtilis (strain 168).